We begin with the raw amino-acid sequence, 341 residues long: 4-hydroxy-2-oxovalerate aldolase (341 aa).

The region spanning 9-259 (VRITEVCLRD…KLDIDLYKMM (251 aa)) is the Pyruvate carboxyltransferase domain. Substrate is bound at residue 17-18 (RD). Mn(2+) is bound at residue Asp-18. The active-site Proton acceptor is the His-21. Substrate contacts are provided by Ser-171 and His-198. Mn(2+)-binding residues include His-198 and His-200. Tyr-289 serves as a coordination point for substrate.

It belongs to the 4-hydroxy-2-oxovalerate aldolase family.

The enzyme catalyses (S)-4-hydroxy-2-oxopentanoate = acetaldehyde + pyruvate. This is 4-hydroxy-2-oxovalerate aldolase from Bacillus thuringiensis (strain Al Hakam).